The following is a 141-amino-acid chain: Nucleoside diphosphate kinase (141 aa).

6 residues coordinate ATP: K11, F59, R87, T93, R104, and N114. Catalysis depends on H117, which acts as the Pros-phosphohistidine intermediate.

This sequence belongs to the NDK family. As to quaternary structure, homotetramer. The cofactor is Mg(2+).

The protein localises to the cytoplasm. It carries out the reaction a 2'-deoxyribonucleoside 5'-diphosphate + ATP = a 2'-deoxyribonucleoside 5'-triphosphate + ADP. The enzyme catalyses a ribonucleoside 5'-diphosphate + ATP = a ribonucleoside 5'-triphosphate + ADP. Functionally, major role in the synthesis of nucleoside triphosphates other than ATP. The ATP gamma phosphate is transferred to the NDP beta phosphate via a ping-pong mechanism, using a phosphorylated active-site intermediate. This chain is Nucleoside diphosphate kinase, found in Pseudomonas fluorescens (strain Pf0-1).